The chain runs to 314 residues: tRNA pseudouridine synthase B (314 aa).

Residue D47 is the Nucleophile of the active site.

This sequence belongs to the pseudouridine synthase TruB family. Type 1 subfamily.

The enzyme catalyses uridine(55) in tRNA = pseudouridine(55) in tRNA. Responsible for synthesis of pseudouridine from uracil-55 in the psi GC loop of transfer RNAs. The protein is tRNA pseudouridine synthase B of Vibrio parahaemolyticus serotype O3:K6 (strain RIMD 2210633).